The following is a 200-amino-acid chain: Orotate phosphoribosyltransferase (200 aa).

5-phospho-alpha-D-ribose 1-diphosphate-binding positions include Arg-95, Lys-99, His-101, and 121–129; that span reads DDVATTGGS. Residues Thr-125 and Arg-153 each coordinate orotate.

It belongs to the purine/pyrimidine phosphoribosyltransferase family. PyrE subfamily. In terms of assembly, homodimer. Mg(2+) is required as a cofactor.

The catalysed reaction is orotidine 5'-phosphate + diphosphate = orotate + 5-phospho-alpha-D-ribose 1-diphosphate. It functions in the pathway pyrimidine metabolism; UMP biosynthesis via de novo pathway; UMP from orotate: step 1/2. In terms of biological role, catalyzes the transfer of a ribosyl phosphate group from 5-phosphoribose 1-diphosphate to orotate, leading to the formation of orotidine monophosphate (OMP). In Cenarchaeum symbiosum (strain A), this protein is Orotate phosphoribosyltransferase.